Reading from the N-terminus, the 252-residue chain is Pantothenate synthetase (252 aa).

29–36 (MGNLHAGH) provides a ligand contact to ATP. H36 serves as the catalytic Proton donor. Residue Q60 coordinates (R)-pantoate. Q60 provides a ligand contact to beta-alanine. 146–149 (GEKD) contributes to the ATP binding site. Q152 is a (R)-pantoate binding site. ATP is bound by residues V175 and 183 to 186 (CSSR).

The protein belongs to the pantothenate synthetase family. In terms of assembly, homodimer.

The protein resides in the cytoplasm. The enzyme catalyses (R)-pantoate + beta-alanine + ATP = (R)-pantothenate + AMP + diphosphate + H(+). The protein operates within cofactor biosynthesis; (R)-pantothenate biosynthesis; (R)-pantothenate from (R)-pantoate and beta-alanine: step 1/1. Catalyzes the condensation of pantoate with beta-alanine in an ATP-dependent reaction via a pantoyl-adenylate intermediate. This is Pantothenate synthetase from Legionella pneumophila (strain Lens).